A 66-amino-acid chain; its full sequence is Large ribosomal subunit protein uL29 (66 aa).

This sequence belongs to the universal ribosomal protein uL29 family.

The sequence is that of Large ribosomal subunit protein uL29 from Thermococcus onnurineus (strain NA1).